A 252-amino-acid polypeptide reads, in one-letter code: Glycerol-3-phosphate acyltransferase (252 aa).

Transmembrane regions (helical) follow at residues 6-26, 66-86, 104-124, 140-160, 164-184, and 204-224; these read SVAM…YLIG, ILTL…TYII, AILV…PIFF, ITID…ILLI, MSLS…IPGI, and VIKG…ILIY.

Belongs to the PlsY family. As to quaternary structure, probably interacts with PlsX.

It is found in the cell membrane. It carries out the reaction an acyl phosphate + sn-glycerol 3-phosphate = a 1-acyl-sn-glycero-3-phosphate + phosphate. It participates in lipid metabolism; phospholipid metabolism. Functionally, catalyzes the transfer of an acyl group from acyl-phosphate (acyl-PO(4)) to glycerol-3-phosphate (G3P) to form lysophosphatidic acid (LPA). This enzyme utilizes acyl-phosphate as fatty acyl donor, but not acyl-CoA or acyl-ACP. This is Glycerol-3-phosphate acyltransferase from Ureaplasma urealyticum serovar 10 (strain ATCC 33699 / Western).